The following is a 181-amino-acid chain: Oligoribonuclease (181 aa).

Residues 8–171 (LIWIDLEMTG…DDIRESVAEL (164 aa)) form the Exonuclease domain. The active site involves Tyr-129.

Belongs to the oligoribonuclease family. As to quaternary structure, homodimer.

The protein resides in the cytoplasm. Functionally, 3'-to-5' exoribonuclease specific for small oligoribonucleotides. The polypeptide is Oligoribonuclease (Escherichia coli O157:H7).